A 434-amino-acid chain; its full sequence is Exopolygalacturonase X-1 (434 aa).

The first 22 residues, 1–22 (MKLSHLLTSAVSVLSLGLTVEG), serve as a signal peptide directing secretion. N-linked (GlcNAc...) asparagine glycosylation is found at Asn113, Asn129, and Asn199. The PbH1 1 repeat unit spans residues 231 to 252 (SKNIVIQNSVINNGDDCVSFKP). Asp245 acts as the Proton donor in catalysis. Cys247 and Cys264 are disulfide-bonded. Asn253 and Asn265 each carry an N-linked (GlcNAc...) asparagine glycan. One copy of the PbH1 2 repeat lies at 254-274 (STEILVQNLYCNGSHGISVGS). The active site involves His268. N-linked (GlcNAc...) asparagine glycans are attached at residues Asn292, Asn297, Asn329, Asn354, and Asn364. The stretch at 327–348 (VSNITYEDMYIENVDWAIEITQ) is one PbH1 3 repeat. The PbH1 4 repeat unit spans residues 362–405 (PSNLTISDVYISNMYGTTSSARDPNIGTIVCSSPDVCSNIYVEN). The cysteines at positions 392 and 398 are disulfide-linked. N-linked (GlcNAc...) asparagine glycosylation is found at Asn423 and Asn430.

The protein belongs to the glycosyl hydrolase 28 family.

It localises to the secreted. The enzyme catalyses [(1-&gt;4)-alpha-D-galacturonosyl](n) + H2O = alpha-D-galacturonate + [(1-&gt;4)-alpha-D-galacturonosyl](n-1). In terms of biological role, specific in hydrolyzing the terminal glycosidic bond of polygalacturonic acid and oligogalacturonates. This is Exopolygalacturonase X-1 (pgaX-1) from Emericella nidulans (strain FGSC A4 / ATCC 38163 / CBS 112.46 / NRRL 194 / M139) (Aspergillus nidulans).